A 780-amino-acid polypeptide reads, in one-letter code: Protein AMEIOTIC 1 (780 aa).

Disordered regions lie at residues 32-60 and 237-327; these read KKKT…SPLS and APKE…RWSA. Positions 50–60 are enriched in polar residues; sequence DSTIQPRSPLS. 2 stretches are compositionally biased toward basic and acidic residues: residues 263-291 and 309-327; these read EVKR…EGKK and RTVE…RWSA. Residues 448–547 adopt a coiled-coil conformation; it reads VEELTEEVNG…LEEQVTYLSS (100 aa).

Its subcellular location is the nucleus. The protein localises to the chromosome. Its function is as follows. Plays a fundamental role in building the proper chromosome structure at the beginning of meiosis in male meiocytes. Required for the transition from leptotene to zygotene in meiocytes. Required for homologous chromosome pairing, and initiation and progression of meiotic recombination. Regulates meiocyte cytoskeleton organization. The protein is Protein AMEIOTIC 1 of Zea mays (Maize).